Here is a 254-residue protein sequence, read N- to C-terminus: tRNA (guanine-N(1)-)-methyltransferase (254 aa).

Residues glycine 112 and 131–136 (IGDYIL) contribute to the S-adenosyl-L-methionine site.

This sequence belongs to the RNA methyltransferase TrmD family. In terms of assembly, homodimer.

It localises to the cytoplasm. The catalysed reaction is guanosine(37) in tRNA + S-adenosyl-L-methionine = N(1)-methylguanosine(37) in tRNA + S-adenosyl-L-homocysteine + H(+). Its function is as follows. Specifically methylates guanosine-37 in various tRNAs. The chain is tRNA (guanine-N(1)-)-methyltransferase from Sulfurihydrogenibium sp. (strain YO3AOP1).